Reading from the N-terminus, the 229-residue chain is Uridylate cyclase (229 aa).

The 132-residue stretch at 47 to 178 folds into the Guanylate cyclase domain; sequence TVLYADLDGS…RAANYAAKLT (132 aa). Tyr50 lines the a ribonucleoside 5'-triphosphate pocket. Positions 52 and 96 each coordinate Mn(2+). Residue Arg97 coordinates a ribonucleoside 5'-triphosphate.

It belongs to the adenylyl cyclase class-4/guanylyl cyclase family. Pyrimidine cyclase subfamily. As to quaternary structure, homodimer. Requires Mn(2+) as cofactor.

It localises to the cytoplasm. The enzyme catalyses UTP = 3',5'-cyclic UMP + diphosphate. Pycsar (pyrimidine cyclase system for antiphage resistance) provides immunity against bacteriophage. The pyrimidine cyclase (PycC) synthesizes cyclic nucleotides in response to infection; these serve as specific second messenger signals. The signals activate the adjacent effector, leading to bacterial cell death and abortive phage infection. A clade B Pycsar system. In terms of biological role, the pyrimidine cyclase gene of a two-gene Pycsar system, generates cyclic UMP (cUMP) from UTP, has little to no activity on ATP, CTP or GTP. Expression of this and adjacent effector BcPycTIR (AC A0A0J5WTU0) probably confers resistance to bacteriophage. The genes are probably only expressed in response to bacteriophage infection. This chain is Uridylate cyclase, found in Burkholderia cepacia (Pseudomonas cepacia).